Reading from the N-terminus, the 127-residue chain is Small ribosomal subunit protein uS12 (127 aa).

Aspartate 89 bears the 3-methylthioaspartic acid mark.

It belongs to the universal ribosomal protein uS12 family. In terms of assembly, part of the 30S ribosomal subunit. Contacts proteins S8 and S17. May interact with IF1 in the 30S initiation complex.

Functionally, with S4 and S5 plays an important role in translational accuracy. In terms of biological role, interacts with and stabilizes bases of the 16S rRNA that are involved in tRNA selection in the A site and with the mRNA backbone. Located at the interface of the 30S and 50S subunits, it traverses the body of the 30S subunit contacting proteins on the other side and probably holding the rRNA structure together. The combined cluster of proteins S8, S12 and S17 appears to hold together the shoulder and platform of the 30S subunit. The polypeptide is Small ribosomal subunit protein uS12 (Akkermansia muciniphila (strain ATCC BAA-835 / DSM 22959 / JCM 33894 / BCRC 81048 / CCUG 64013 / CIP 107961 / Muc)).